The primary structure comprises 286 residues: MINSTKGYIDQNGLAAKQFVQTKQLSVIRLTFMVAAFGIFFIFLVALTVQQLLSRSTLIDLASDFRTLSTIAVITSFVSLILYFVTAFKLRNPNTSLTWFWALIITDVISYGITLGILLTLATTFSKQVNFEANDIVYAFLGASLVFGSVWGLSALPSQKRRYQQTQTLFHILLWAFVISIVASLLSFILNFTVFASTTNLLDRIIPGLSLIVGGIFSLISVYFVSLQIRNEQDLIKYYESEDYEMARRQSWRSALFFGAWLISSFMNLVYFILRIILITKNFSRV.

Helical transmembrane passes span 30 to 50 (LTFM…LTVQ), 68 to 88 (LSTI…VTAF), 99 to 119 (WFWA…GILL), 136 to 156 (IVYA…LSAL), 169 to 189 (LFHI…LSFI), 205 to 225 (IIPG…VYFV), and 254 to 274 (SALF…YFIL).

The protein resides in the cell membrane. This is an uncharacterized protein from Mycoplasma genitalium (strain ATCC 33530 / DSM 19775 / NCTC 10195 / G37) (Mycoplasmoides genitalium).